The chain runs to 116 residues: Large ribosomal subunit protein bL19 (116 aa).

This sequence belongs to the bacterial ribosomal protein bL19 family.

Functionally, this protein is located at the 30S-50S ribosomal subunit interface and may play a role in the structure and function of the aminoacyl-tRNA binding site. The chain is Large ribosomal subunit protein bL19 from Clostridioides difficile (strain 630) (Peptoclostridium difficile).